Reading from the N-terminus, the 322-residue chain is Peptidase 1 (322 aa).

An N-terminal signal peptide occupies residues 1 to 18 (MKFVLAIASLLVLSVVYA). The propeptide occupies 19 to 99 (YPSEIRTFEE…LKKEFDLDAG (81 aa)). A disulfide bridge connects residues Cys131 and Cys171. The active site involves Cys134. Asn152 carries N-linked (GlcNAc...) asparagine glycosylation. Residues His270 and Asn290 contribute to the active site.

This sequence belongs to the peptidase C1 family. In terms of tissue distribution, expressed in the gut.

It is found in the secreted. It carries out the reaction Broad endopeptidase specificity.. Its function is as follows. Probable thiol protease. The polypeptide is Peptidase 1 (Psoroptes ovis (Sheep scab mite)).